The sequence spans 206 residues: Large ribosomal subunit protein uL4 (206 aa).

The disordered stretch occupies residues lysine 49 to arginine 73.

Belongs to the universal ribosomal protein uL4 family. In terms of assembly, part of the 50S ribosomal subunit.

In terms of biological role, one of the primary rRNA binding proteins, this protein initially binds near the 5'-end of the 23S rRNA. It is important during the early stages of 50S assembly. It makes multiple contacts with different domains of the 23S rRNA in the assembled 50S subunit and ribosome. Its function is as follows. Forms part of the polypeptide exit tunnel. The polypeptide is Large ribosomal subunit protein uL4 (Paramagnetospirillum magneticum (strain ATCC 700264 / AMB-1) (Magnetospirillum magneticum)).